The primary structure comprises 88 residues: Small ribosomal subunit protein uS19 (88 aa).

Belongs to the universal ribosomal protein uS19 family.

In terms of biological role, protein S19 forms a complex with S13 that binds strongly to the 16S ribosomal RNA. This is Small ribosomal subunit protein uS19 from Chlamydia caviae (strain ATCC VR-813 / DSM 19441 / 03DC25 / GPIC) (Chlamydophila caviae).